A 331-amino-acid chain; its full sequence is Dioxygenase swnH2 (331 aa).

The segment covering 1–11 (MINSDAQSAQK) has biased composition (polar residues). A disordered region spans residues 1 to 31 (MINSDAQSAQKQVEVEKPDEKYSAPRLLPPI). Residues 13–23 (VEVEKPDEKYS) are compositionally biased toward basic and acidic residues. The Fe cation site is built by His-173, Asp-175, and His-250.

Belongs to the PhyH family. In terms of assembly, homodimer. Fe cation serves as cofactor.

It participates in mycotoxin biosynthesis. Functionally, dioxygenase; part of the gene cluster that mediates the biosynthesis of swainsonine (SW), a cytotoxic fungal alkaloid and a potential cancer therapy drug. Swainsonine production occurs via a multibranched pathway and is dispensable for fungal colonization of plants and infection of insect hosts. The first step of swainsonine biosynthesis is the production of the precursor pipecolic acid (PA) via conversion of L-lysine (Lys) to 1-piperideine-6-carboxylate (P6C) by the aminotransferase swnA, the latter being further reduced to PA by the reductase swnR. PA can be converted from lysine by both the SW biosynthetic cluster and the unclustered genes such as lysine cyclodeaminase. The PKS-NRPS hybrid synthetase swnK uptakes and condensates PA and malonyl-CoA with and without skipping of the ketoreductase (KR) domain in order to produce 3 intermediates, 1-oxoindolizidine, (1S)-1-hydroxyindolizin, and (1R)-1-hydroxyindolizine; with the transisomer (1S)-1-hydroxyindolizin being predominant. The terminal thioester reductase (TE) domain of swnK is involved in reduction of the thioester bond to release the intermediate aldehydes. The oxidoreductase swnN could contribute to the reduction of 1-oxoindolizidine to (1S)-1-hydroxyindolizin and (1R)-1-hydroxyindolizine, contributing to the major route of SW production. The dioxygenase swnH2 would be responsible for the oxidization of (1R)-1-hydroxyindolizine into (1R,2S)-1,2-dihydroxyindolizine and of (1S)-1-hydroxyindolizin to yield both (1R,2S)-1,2-dihydroxyindolizine and (1S,2S)-1,2-dihydroxyindolizine. The dioxygenase swnH1 then performs the conversion of the 1,2-dihydroxyindolizine epimers to SW. This chain is Dioxygenase swnH2, found in Metarhizium robertsii (strain ARSEF 23 / ATCC MYA-3075) (Metarhizium anisopliae (strain ARSEF 23)).